The chain runs to 107 residues: UPF0145 protein CHY_0465 (107 aa).

It belongs to the UPF0145 family.

The sequence is that of UPF0145 protein CHY_0465 from Carboxydothermus hydrogenoformans (strain ATCC BAA-161 / DSM 6008 / Z-2901).